A 248-amino-acid chain; its full sequence is uncharacterized protein (248 aa).

A signal peptide spans 1-22 (MNKLQSYFIASVLYVMTPHAFA).

To E.coli YjbG.

This is an uncharacterized protein from Escherichia coli (strain K12).